A 189-amino-acid polypeptide reads, in one-letter code: Peptidyl-tRNA hydrolase (189 aa).

Tyr14 lines the tRNA pocket. His19 acts as the Proton acceptor in catalysis. The tRNA site is built by Tyr64, Asn66, and Asn112.

The protein belongs to the PTH family. In terms of assembly, monomer.

It localises to the cytoplasm. It catalyses the reaction an N-acyl-L-alpha-aminoacyl-tRNA + H2O = an N-acyl-L-amino acid + a tRNA + H(+). Hydrolyzes ribosome-free peptidyl-tRNAs (with 1 or more amino acids incorporated), which drop off the ribosome during protein synthesis, or as a result of ribosome stalling. Its function is as follows. Catalyzes the release of premature peptidyl moieties from peptidyl-tRNA molecules trapped in stalled 50S ribosomal subunits, and thus maintains levels of free tRNAs and 50S ribosomes. This is Peptidyl-tRNA hydrolase from Clostridium botulinum (strain Okra / Type B1).